The primary structure comprises 600 residues: NADH-quinone oxidoreductase subunit C/D (600 aa).

The interval 1–190 is NADH dehydrogenase I subunit C; the sequence is MVNNMTDLTA…DPFELTKAKQ (190 aa). The tract at residues 214-600 is NADH dehydrogenase I subunit D; the sequence is DFMFLNLGPN…IDFVMSDVDR (387 aa).

This sequence in the N-terminal section; belongs to the complex I 30 kDa subunit family. It in the C-terminal section; belongs to the complex I 49 kDa subunit family. NDH-1 is composed of 13 different subunits. Subunits NuoB, CD, E, F, and G constitute the peripheral sector of the complex.

Its subcellular location is the cell inner membrane. The catalysed reaction is a quinone + NADH + 5 H(+)(in) = a quinol + NAD(+) + 4 H(+)(out). Functionally, NDH-1 shuttles electrons from NADH, via FMN and iron-sulfur (Fe-S) centers, to quinones in the respiratory chain. The immediate electron acceptor for the enzyme in this species is believed to be ubiquinone. Couples the redox reaction to proton translocation (for every two electrons transferred, four hydrogen ions are translocated across the cytoplasmic membrane), and thus conserves the redox energy in a proton gradient. This chain is NADH-quinone oxidoreductase subunit C/D, found in Citrobacter koseri (strain ATCC BAA-895 / CDC 4225-83 / SGSC4696).